The following is a 489-amino-acid chain: Potassium voltage-gated channel subfamily A member 7 (489 aa).

The helical transmembrane segment at 176–196 (VLAVVSVLVILVSIVVFCLET) threads the bilayer. N-linked (GlcNAc...) asparagine glycosylation is present at N224. A helical transmembrane segment spans residues 242–262 (FFVVETLCICWFSFELLVRLV). C264 carries the S-palmitoyl cysteine lipid modification. Residues 274–294 (VMNLIDFVAILPYFVALGTEL) traverse the membrane as a helical segment. Residues 309–328 (ILRVIRLVRVFRIFKLSRHS) traverse the membrane as a helical; Voltage-sensor segment. The chain crosses the membrane as a helical span at residues 345 to 365 (LGLLIFFLFIGVVLFSSAVYF). The short motif at 391–396 (TVGYGD) is the Selectivity filter element. A helical membrane pass occupies residues 406–426 (IVGSLCAIAGVLTISLPVPVI).

The protein belongs to the potassium channel family. A (Shaker) (TC 1.A.1.2) subfamily. Kv1.7/KCNA7 sub-subfamily. In terms of assembly, heterotetramer of potassium channel proteins. In terms of tissue distribution, detected in heart, skeletal muscle, brain, and pancreatic islet cells.

The protein localises to the membrane. It catalyses the reaction K(+)(in) = K(+)(out). Functionally, mediates the voltage-dependent potassium ion permeability of excitable membranes. Assuming opened or closed conformations in response to the voltage difference across the membrane, the protein forms a potassium-selective channel through which potassium ions may pass in accordance with their electrochemical gradient. Channels formed by isoform 1 inactivate faster than channels formed by isoform 2. The chain is Potassium voltage-gated channel subfamily A member 7 (Kcna7) from Mus musculus (Mouse).